Reading from the N-terminus, the 180-residue chain is Adenine phosphoribosyltransferase (180 aa).

It belongs to the purine/pyrimidine phosphoribosyltransferase family. Homodimer.

The protein resides in the cytoplasm. The catalysed reaction is AMP + diphosphate = 5-phospho-alpha-D-ribose 1-diphosphate + adenine. The protein operates within purine metabolism; AMP biosynthesis via salvage pathway; AMP from adenine: step 1/1. Catalyzes a salvage reaction resulting in the formation of AMP, that is energically less costly than de novo synthesis. This Sinorhizobium medicae (strain WSM419) (Ensifer medicae) protein is Adenine phosphoribosyltransferase.